The primary structure comprises 575 residues: uncharacterized protein (575 aa).

A run of 6 helical transmembrane segments spans residues 16–36, 50–70, 132–152, 154–174, 243–263, and 264–284; these read FFLDFFSAIAGGLMELSFPLI, WGLIIATSIGLFAVYALSSAL, PEDLFIAVMTILGAFGVMLFI, WQLALLTFIIMPIVIWLALYF, ISYMLTRFVTLFVLLCGTWFV, and IRGSLSYGEFVAFVLLTNVLF. Positions 16–299 constitute an ABC transmembrane type-1 domain; that stretch reads FFLDFFSAIA…INAIIEMYPR (284 aa). The region spanning 333–567 is the ABC transporter domain; that stretch reads IRYKHVSFGY…GGLYSRLHQA (235 aa). Residue 366-373 coordinates ATP; the sequence is GPSGAGKS.

The protein belongs to the ABC transporter superfamily.

Its subcellular location is the cell membrane. It localises to the membrane raft. This is an uncharacterized protein from Bacillus subtilis (strain 168).